Here is a 701-residue protein sequence, read N- to C-terminus: Reverse gyrase subunit A (701 aa).

Residues 41 to 197 (MVLFIVESPN…NIYRAEFHEV (157 aa)) enclose the Toprim domain. Glutamate 47 is a binding site for Mg(2+). The RG C-terminal-type zinc finger occupies 117 to 143 (IKKCLDCGHQFVDEDKCPRCGSENIDD). The Zn(2+) site is built by cysteine 120, cysteine 123, cysteine 133, and cysteine 136. Aspartate 166 provides a ligand contact to Mg(2+). Positions 213-602 (NTNRVKAQLV…SFKKELIEIW (390 aa)) constitute a Topo IA-type catalytic domain. Residue tyrosine 352 is the O-(5'-phospho-DNA)-tyrosine intermediate of the active site.

This sequence belongs to the type IA topoisomerase family. In terms of assembly, heterodimer of an RgyA and RgyB subunit. Requires Zn(2+) as cofactor. Mg(2+) is required as a cofactor.

It is found in the cytoplasm. Functionally, modifies the topological state of DNA by introducing positive supercoils in an ATP-dependent process. Binds to single-stranded DNA, transiently cleaves and then rejoins the end, introducing a positive supercoil in the process. The scissile phosphodiester is attacked by the catalytic tyrosine of the enzyme, resulting in the formation of a DNA-(5'-phosphotyrosyl)-enzyme intermediate. Probably involved in rewinding DNA strands in regions of the chromosome that have opened up to allow replication, transcription, DNA repair or for DNA protection. Reconstituted holoenzyme binds dsDNA a bit better than ssDNA, this subunit preferentially binds ssDNA. In isolation this subunit relaxes negatively-supercoiled DNA, and stimulates the endogenous ATPase activity of the RgyB subunit. The sequence is that of Reverse gyrase subunit A from Nanoarchaeum equitans (strain Kin4-M).